The chain runs to 350 residues: Phosphotriesterase-related protein (350 aa).

The a divalent metal cation site is built by His-22, His-24, Glu-169, His-201, His-230, and Asp-298.

Belongs to the metallo-dependent hydrolases superfamily. Phosphotriesterase family. It depends on a divalent metal cation as a cofactor.

The chain is Phosphotriesterase-related protein from Drosophila erecta (Fruit fly).